Consider the following 470-residue polypeptide: Neuraminidase (470 aa).

At 1-6 the chain is on the intravirion side; the sequence is MNPNQK. Residues 7 to 27 traverse the membrane as a helical segment; that stretch reads IITIGSICMTIGTISLILQIG. The tract at residues 11-33 is involved in apical transport and lipid raft association; sequence GSICMTIGTISLILQIGNIISIW. Residues 28–470 are Virion surface-facing; it reads NIISIWISHS…GAELPFTIDM (443 aa). Positions 36–90 are hypervariable stalk region; sequence HSIQTGSQNHTGICNQRIITYENNTWVNQTYVNISNTNVVAGKDTTSMILAGNSS. N-linked (GlcNAc...) asparagine; by host glycosylation is found at Asn-44, Asn-58, Asn-63, Asn-68, and Asn-88. Positions 91–470 are head of neuraminidase; the sequence is LCPIRGWAIY…GAELPFTIDM (380 aa). 8 cysteine pairs are disulfide-bonded: Cys-92/Cys-417, Cys-124/Cys-129, Cys-184/Cys-231, Cys-233/Cys-238, Cys-279/Cys-292, Cys-281/Cys-290, Cys-318/Cys-335, and Cys-421/Cys-447. Residue Arg-118 participates in substrate binding. Asn-146 carries an N-linked (GlcNAc...) asparagine; by host glycan. The active-site Proton donor/acceptor is Asp-151. Arg-152 lines the substrate pocket. A glycan (N-linked (GlcNAc...) asparagine; by host) is linked at Asn-235. 277-278 is a binding site for substrate; that stretch reads EE. Arg-293 is a substrate binding site. 3 residues coordinate Ca(2+): Asp-294, Gly-298, and Asp-324. Asn-365 is a glycosylation site (N-linked (GlcNAc...) asparagine; by host). Arg-368 is a binding site for substrate. Tyr-402 acts as the Nucleophile in catalysis. Asn-455 carries an N-linked (GlcNAc...) asparagine; by host glycan.

Belongs to the glycosyl hydrolase 34 family. In terms of assembly, homotetramer. Ca(2+) serves as cofactor. In terms of processing, N-glycosylated.

It localises to the virion membrane. It is found in the host apical cell membrane. The catalysed reaction is Hydrolysis of alpha-(2-&gt;3)-, alpha-(2-&gt;6)-, alpha-(2-&gt;8)- glycosidic linkages of terminal sialic acid residues in oligosaccharides, glycoproteins, glycolipids, colominic acid and synthetic substrates.. With respect to regulation, inhibited by the neuraminidase inhibitors zanamivir (Relenza) and oseltamivir (Tamiflu). These drugs interfere with the release of progeny virus from infected cells and are effective against all influenza strains. Resistance to neuraminidase inhibitors is quite rare. In terms of biological role, catalyzes the removal of terminal sialic acid residues from viral and cellular glycoconjugates. Cleaves off the terminal sialic acids on the glycosylated HA during virus budding to facilitate virus release. Additionally helps virus spread through the circulation by further removing sialic acids from the cell surface. These cleavages prevent self-aggregation and ensure the efficient spread of the progeny virus from cell to cell. Otherwise, infection would be limited to one round of replication. Described as a receptor-destroying enzyme because it cleaves a terminal sialic acid from the cellular receptors. May facilitate viral invasion of the upper airways by cleaving the sialic acid moieties on the mucin of the airway epithelial cells. Likely to plays a role in the budding process through its association with lipid rafts during intracellular transport. May additionally display a raft-association independent effect on budding. Plays a role in the determination of host range restriction on replication and virulence. Sialidase activity in late endosome/lysosome traffic seems to enhance virus replication. The protein is Neuraminidase of Influenza A virus (strain A/Malaysia:Malaya/302/1954 H1N1).